Here is a 137-residue protein sequence, read N- to C-terminus: MSMFKEFRDFAMRGNVVDLAVGVIIGAAFGKIVSSLVANIIMPPLGLLIGGVDFKQFSWILKPADGAAPAVVMEYGVFLQTVFDFVIVAFAIFMAIKLMNRLYTKKEVEKPVAKPSAEETLLSEIRDLLKEQNGKAQ.

2 helical membrane-spanning segments follow: residues Phe-10–Gly-30 and Gly-76–Ile-96.

Belongs to the MscL family. As to quaternary structure, homopentamer.

It is found in the cell inner membrane. In terms of biological role, channel that opens in response to stretch forces in the membrane lipid bilayer. May participate in the regulation of osmotic pressure changes within the cell. This is Large-conductance mechanosensitive channel from Erwinia tasmaniensis (strain DSM 17950 / CFBP 7177 / CIP 109463 / NCPPB 4357 / Et1/99).